A 53-amino-acid chain; its full sequence is Large ribosomal subunit protein bL32 (53 aa).

Positions 1–27 (MAVQQNKKSRSRRDMRRSHDALTTAAV) are disordered. The span at 7-16 (KKSRSRRDMR) shows a compositional bias: basic residues.

This sequence belongs to the bacterial ribosomal protein bL32 family.

The protein is Large ribosomal subunit protein bL32 of Glaesserella parasuis serovar 5 (strain SH0165) (Haemophilus parasuis).